Consider the following 119-residue polypeptide: Ribonuclease P protein component (119 aa).

The disordered stretch occupies residues 1 to 24 (MRGSSRFRPHEKLRASDDYQRVKR). A compositionally biased stretch (basic and acidic residues) spans 8-21 (RPHEKLRASDDYQR).

The protein belongs to the RnpA family. In terms of assembly, consists of a catalytic RNA component (M1 or rnpB) and a protein subunit.

It carries out the reaction Endonucleolytic cleavage of RNA, removing 5'-extranucleotides from tRNA precursor.. RNaseP catalyzes the removal of the 5'-leader sequence from pre-tRNA to produce the mature 5'-terminus. It can also cleave other RNA substrates such as 4.5S RNA. The protein component plays an auxiliary but essential role in vivo by binding to the 5'-leader sequence and broadening the substrate specificity of the ribozyme. This Syntrophobacter fumaroxidans (strain DSM 10017 / MPOB) protein is Ribonuclease P protein component.